An 827-amino-acid chain; its full sequence is MHFTKLDDSPMFRKQLQSMEESAEILRERSLKFYKGCRKYTEGLGEAYDGDIAFASALETFGGGHNDPISVAFGGPVMTKFTIALREIGTYKEVLRSQVEHILNDRLLQFANMDLHEVKEARKRFDKASLTYDQAREKFLSLRKGTKSDVAAALEQELHTSRSMFEQARFNLVTALSNVEAKKRFEFLEAVSGTMDAHLRYFKQGYELLHQMEPYINQVLTYAQQSRERSNYEQAALNEKMQEYKRQVDRESRWGSNGSNGSPNGDGIQAIGRSSHKMIDAVMQSAARGKVQTIRQGYLSKRSSNLRGDWKRRFFVLDSRGMLYYYRKQCSKPSGSGSQLSGQRNSSELGSGLLSRWLSSNNHGHGGVHDEKSVARHTVNLLTSTIKVDADQSDLRFCFRIISPTKNYTLQAESALDQMDWIEKITGVIASLLSSQVPEQRLPGSPMGSGHHRSASESSSYESSEYDHPTTEEFVCERSFLGYNERPSRSFQPQRSIRKGEKPIDALRKVCGNDKCADCGAPEPDWASLNLGVLVCIECSGVHRNLGVHISKVRSLTLDVKVWEPSVISLFQALGNTFANTVWEELLHSRSAIHFDPGLTVSDKSRVMVTGKPSYADMISIKEKYIQAKYAEKLFVRRSRDSDFPQSAAQQMWDAVSGNDKKAVYRLIVNGDADVNYVYDQTSSSSLTLSRVILVPERPKREDVLLRLRNELLDRTGSSSNISPEGSGGSSLLHCACEKADLGMVELLLQYGANVNASDSSGQTPLHCCLLRGKVTIARLLLTRGADPEAMNREGKTALDIAAESNFTDPEVLALLSDTNGYNHRQC.

The 225-residue stretch at 1-225 folds into the BAR domain; the sequence is MHFTKLDDSP…INQVLTYAQQ (225 aa). Coiled-coil stretches lie at residues 116 to 139 and 223 to 253; these read HEVKEARKRFDKASLTYDQAREKF and AQQSRERSNYEQAALNEKMQEYKRQVDRESR. The tract at residues 246–269 is disordered; that stretch reads RQVDRESRWGSNGSNGSPNGDGIQ. Positions 255-267 are enriched in low complexity; that stretch reads GSNGSNGSPNGDG. One can recognise a PH domain in the interval 292–430; the sequence is QTIRQGYLSK…WIEKITGVIA (139 aa). Residues 439 to 467 form a disordered region; it reads EQRLPGSPMGSGHHRSASESSSYESSEYD. A Phosphoserine modification is found at serine 445. The 143-residue stretch at 501–643 folds into the Arf-GAP domain; the sequence is EKPIDALRKV…LFVRRSRDSD (143 aa). The segment at 516–539 adopts a C4-type zinc-finger fold; it reads CADCGAPEPDWASLNLGVLVCIEC. ANK repeat units follow at residues 728–757, 761–790, and 794–825; these read GGSSLLHCACEKADLGMVELLLQYGANVNA, SGQTPLHCCLLRGKVTIARLLLTRGADPEA, and EGKTALDIAAESNFTDPEVLALLSDTNGYNHR.

Homodimer. Interacts with DRP1A. Interacts with VAB. Broadly expressed. Detected in developing veins of the leaf and root. Detected in roots, hypocotyls, cotyledons, leaves, siliques and shoot apical meristems.

It localises to the golgi apparatus. It is found in the trans-Golgi network. Its activity is regulated as follows. ARF GAP activity strongly enhanced by phosphatidylinositol 4-monophosphate (PIP) and moderately enhanced by phosphatidylinositol 4,5-bisphosphate (PIP2). In terms of biological role, GTPase-activating protein (GAP) for ADP ribosylation factor (ARF). Involved in the spatial control of provascular differentiation. Required for the formation of the normal pattern of continuous secondary veins. Involved in auxin signaling but not in polar auxin transport or in auxin responses. Required for PIN1 internalization in roots. The chain is ADP-ribosylation factor GTPase-activating protein AGD3 (AGD3) from Arabidopsis thaliana (Mouse-ear cress).